The chain runs to 553 residues: 5'-nucleotidase (553 aa).

A signal peptide spans 1 to 21; it reads MKQRLIVKTALSAAILATLAG. Cysteine 22 carries the N-palmitoyl cysteine lipid modification. Cysteine 22 carries S-diacylglycerol cysteine lipidation. Aspartate 45, histidine 47, aspartate 88, asparagine 120, histidine 221, histidine 256, and glutamine 258 together coordinate a divalent metal cation. Substrate is bound by residues phenylalanine 432 and 501–507; that span reads YNAAGGD.

The protein belongs to the 5'-nucleotidase family. It depends on chloride as a cofactor. Mg(2+) serves as cofactor.

The protein localises to the cell outer membrane. It carries out the reaction a ribonucleoside 5'-phosphate + H2O = a ribonucleoside + phosphate. Degradation of extracellular 5'-nucleotides for nutritional needs. This is 5'-nucleotidase (nutA) from Vibrio vulnificus (strain CMCP6).